The chain runs to 435 residues: Membrane-bound ghrelin O-acyltransferase MBOAT4 (435 aa).

Residues Met-1–Gln-5 lie on the Lumenal side of the membrane. A helical membrane pass occupies residues Phe-6–Phe-26. Topologically, residues Asn-27–Arg-40 are cytoplasmic. The chain crosses the membrane as a helical span at residues Tyr-41–Met-56. The Lumenal segment spans residues Gly-57–Tyr-59. The chain crosses the membrane as a helical span at residues Ala-60 to Ser-76. Residues Leu-77–Val-82 lie on the Cytoplasmic side of the membrane. A helical membrane pass occupies residues His-83–Leu-101. Residues His-102 to Leu-120 lie on the Lumenal side of the membrane. The chain crosses the membrane as a helical span at residues Ser-121–Asp-136. Residues Ile-137–Thr-206 are Cytoplasmic-facing. The chain crosses the membrane as a helical span at residues Trp-207–Ser-227. Topologically, residues Ala-228–Cys-240 are lumenal. Residues Ile-241 to Leu-261 form a helical membrane-spanning segment. Over Asp-262–Arg-324 the chain is Cytoplasmic. Active-site residues include Asn-307 and His-338. Residues Trp-325–His-338 traverse the membrane as a helical segment. Residues Gly-339–Leu-340 lie on the Lumenal side of the membrane. The chain crosses the membrane as a helical span at residues His-341–Ala-357. Over Asp-358–Leu-376 the chain is Cytoplasmic. The chain crosses the membrane as a helical span at residues Leu-377–Val-397. Residues Glu-398 to Arg-407 lie on the Lumenal side of the membrane. Residues Leu-408–Ala-428 traverse the membrane as a helical segment. Residues Arg-429–Asn-435 lie on the Cytoplasmic side of the membrane.

The protein belongs to the membrane-bound acyltransferase family. As to quaternary structure, monomer. In terms of processing, not glycosylated.

It localises to the endoplasmic reticulum membrane. The enzyme catalyses octanoyl-CoA + L-seryl-[protein] = O-octanoyl-L-seryl-[protein] + CoA. It carries out the reaction decanoyl-CoA + L-seryl-[protein] = O-decanoyl-L-seryl-[protein] + CoA. The catalysed reaction is L-seryl-[protein] + acetyl-CoA = O-acetyl-L-seryl-[protein] + CoA. It catalyses the reaction L-seryl-[protein] + butanoyl-CoA = O-butanoyl-L-seryl-[protein] + CoA. The enzyme catalyses pentanoyl-CoA + L-seryl-[protein] = O-pentanoyl-L-seryl-[protein] + CoA. It carries out the reaction hexanoyl-CoA + L-seryl-[protein] = O-hexanoyl-L-seryl-[protein] + CoA. The catalysed reaction is heptanoyl-CoA + L-seryl-[protein] = O-heptanoyl-L-seryl-[protein] + CoA. It catalyses the reaction nonanoyl-CoA + L-seryl-[protein] = O-nonanoyl-L-seryl-[protein] + CoA. The enzyme catalyses L-seryl-[protein] + dodecanoyl-CoA = O-dodecanoyl-L-seryl-[protein] + CoA. It carries out the reaction L-seryl-[protein] + tetradecanoyl-CoA = O-tetradecanoyl-L-seryl-[protein] + CoA. The catalysed reaction is a fatty acyl-CoA + L-seryl-[protein] = O-fatty acyl-L-seryl-[protein] + CoA. In terms of biological role, catalyzes ghrelin acylation at 'Ser-3' using preferentially octanoyl-CoA, hexanoyl-CoA and decanoyl-CoA as acyl-CoA donors leading to ghrelin activity. In vitro uses also acyl-CoA donors of different lengths from short-chain (C2) to long-chain fatty acids (C16) knowing that acyl-CoA donors from butanoyl-CoA (C4) to dodecanoyl-CoA (C12) are more efficient compared to longer acyl-CoA donors, such as myristoyl-CoA (C14) and palmitoyl-CoA (C16) that are not efficient. In Rattus norvegicus (Rat), this protein is Membrane-bound ghrelin O-acyltransferase MBOAT4.